A 187-amino-acid polypeptide reads, in one-letter code: GTP cyclohydrolase 1 (187 aa).

Residues cysteine 76, histidine 79, and cysteine 148 each coordinate Zn(2+).

Belongs to the GTP cyclohydrolase I family. As to quaternary structure, toroid-shaped homodecamer, composed of two pentamers of five dimers.

The enzyme catalyses GTP + H2O = 7,8-dihydroneopterin 3'-triphosphate + formate + H(+). It participates in cofactor biosynthesis; 7,8-dihydroneopterin triphosphate biosynthesis; 7,8-dihydroneopterin triphosphate from GTP: step 1/1. This chain is GTP cyclohydrolase 1, found in Streptococcus agalactiae serotype V (strain ATCC BAA-611 / 2603 V/R).